Here is a 354-residue protein sequence, read N- to C-terminus: 5,10-methenyltetrahydromethanopterin hydrogenase (354 aa).

Belongs to the HMD family.

The enzyme catalyses 5,10-methenyl-5,6,7,8-tetrahydromethanopterin + H2 = 5,10-methylenetetrahydromethanopterin + H(+). The protein operates within one-carbon metabolism; methanogenesis from CO(2); 5,10-methylene-5,6,7,8-tetrahydromethanopterin from 5,10-methenyl-5,6,7,8-tetrahydromethanopterin (hydrogen route): step 1/1. Its function is as follows. Catalyzes the reversible reduction of methenyl-H(4)MPT(+) to methylene-H(4)MPT. This is 5,10-methenyltetrahydromethanopterin hydrogenase from Methanococcus vannielii (strain ATCC 35089 / DSM 1224 / JCM 13029 / OCM 148 / SB).